The chain runs to 799 residues: MVLPILPLIDDLASWGTKKAYASLVGQVLLDGSSLNKDEVLQFAKEEEVPLVALSLPNAKFSDDDIIAFLNNGVSSLFIASQDAKIVDHLVEELNVPKNRIVVEGNGVFHNQFLVNQKFSQDRIVSIKKLTKDLLIKEVVAEVRTDRPDGLFTTLVVDQYERCLGLVYSSKESIAKAIDLGRGVYYSRSRNEIWVKGETSGNGQKLLQISTDCDSDALKFIVEQENVGFCHLETMSCFGEFKHGLVGLESLLKQRLQDAPKESYTRRLFNDPALLDAKIKEEAEELTEAKGKQEISWEAADLFYFALAKLVTNNVSLKDVENNLNMKHLKITRRKGDAKPKFVAQAKAEEEAPTGPIHLHVVNASDKEGIKKALSRPIQKTSEIMHLVNPIIENVRDRGDSALLEYTEKFDGVKLSTPVLNAPFPEEYFEGLTEEMKDALDLSIENVRKFHAAQLPKETLEVETQPGVLCSRFPRPIEKVGLYIPGGTAILPSTALMLGVPAQVAQCKEIVFASPPRKSDGKVSPEVVYVAEKVGARMIVLAGGAQAVAAMAYGTETIPKVDKVLGPGNQFVTAAKMYVQNDTQALCSIDMPAGPSEVLVIADEDADADFVASDLLSQAEHGIDSQVILVGIKLSEKKIQEIQDAVHDQAMQLPRVDIVRKCIAHSTIILCDGYEEALEMSNKYAPEHLILQIANANDYVKLVDNAGSVFVGAYTPESCGDYSSGTNHTLPTYGYARQYSGANTATFQKFITAQNITPEGLENIGRAVMCVAKKEGLDGHRNAVKIRMSKLGLIPKDFQ.

The tract at residues 1 to 229 is phosphoribosyl-AMP cyclohydrolase; sequence MVLPILPLID…FIVEQENVGF (229 aa). Residues 230-312 form a phosphoribosyl-ATP pyrophosphohydrolase region; it reads CHLETMSCFG…FYFALAKLVT (83 aa). Residues 313–799 are histidinol dehydrogenase; sequence NNVSLKDVEN…KLGLIPKDFQ (487 aa). Zn(2+) is bound by residues Q618 and H621. Active-site residues include E687 and H688. D721 and H780 together coordinate Zn(2+).

This sequence in the C-terminal section; belongs to the histidinol dehydrogenase family. Zn(2+) serves as cofactor.

It catalyses the reaction 1-(5-phospho-beta-D-ribosyl)-5'-AMP + H2O = 1-(5-phospho-beta-D-ribosyl)-5-[(5-phospho-beta-D-ribosylamino)methylideneamino]imidazole-4-carboxamide. The enzyme catalyses 1-(5-phospho-beta-D-ribosyl)-ATP + H2O = 1-(5-phospho-beta-D-ribosyl)-5'-AMP + diphosphate + H(+). It carries out the reaction L-histidinol + 2 NAD(+) + H2O = L-histidine + 2 NADH + 3 H(+). It functions in the pathway amino-acid biosynthesis; L-histidine biosynthesis; L-histidine from 5-phospho-alpha-D-ribose 1-diphosphate: step 2/9. The protein operates within amino-acid biosynthesis; L-histidine biosynthesis; L-histidine from 5-phospho-alpha-D-ribose 1-diphosphate: step 3/9. It participates in amino-acid biosynthesis; L-histidine biosynthesis; L-histidine from 5-phospho-alpha-D-ribose 1-diphosphate: step 9/9. This is Histidine biosynthesis trifunctional protein (HIS4) from Saccharomyces bayanus (Yeast).